The chain runs to 330 residues: Elongation factor Ts (330 aa).

The interval 79-82 (TDFV) is involved in Mg(2+) ion dislocation from EF-Tu.

Belongs to the EF-Ts family.

The protein resides in the cytoplasm. Functionally, associates with the EF-Tu.GDP complex and induces the exchange of GDP to GTP. It remains bound to the aminoacyl-tRNA.EF-Tu.GTP complex up to the GTP hydrolysis stage on the ribosome. The protein is Elongation factor Ts of Bacteroides fragilis (strain ATCC 25285 / DSM 2151 / CCUG 4856 / JCM 11019 / LMG 10263 / NCTC 9343 / Onslow / VPI 2553 / EN-2).